The following is a 238-amino-acid chain: Aspartate/glutamate leucyltransferase (238 aa).

Belongs to the R-transferase family. Bpt subfamily.

The protein localises to the cytoplasm. It carries out the reaction N-terminal L-glutamyl-[protein] + L-leucyl-tRNA(Leu) = N-terminal L-leucyl-L-glutamyl-[protein] + tRNA(Leu) + H(+). It catalyses the reaction N-terminal L-aspartyl-[protein] + L-leucyl-tRNA(Leu) = N-terminal L-leucyl-L-aspartyl-[protein] + tRNA(Leu) + H(+). In terms of biological role, functions in the N-end rule pathway of protein degradation where it conjugates Leu from its aminoacyl-tRNA to the N-termini of proteins containing an N-terminal aspartate or glutamate. In Shewanella oneidensis (strain ATCC 700550 / JCM 31522 / CIP 106686 / LMG 19005 / NCIMB 14063 / MR-1), this protein is Aspartate/glutamate leucyltransferase.